The primary structure comprises 413 residues: Cyclic AMP-dependent transcription factor ATF-7 (413 aa).

The tract at residues 1–285 (MGDDRPFVCS…GMVVGTASTM (285 aa)) is transactivation domain. The C2H2-type zinc-finger motif lies at 7-31 (FVCSAPGCGQRFTNEDHLAVHKHKH). Threonine 51 is modified (phosphothreonine; by MAPK11). Phosphothreonine is present on residues threonine 53 and threonine 101. 2 disordered regions span residues 81 to 140 (ASDD…TTKP) and 299 to 337 (HPDA…RRQR). A Glycyl lysine isopeptide (Lys-Gly) (interchain with G-Cter in SUMO1) cross-link involves residue lysine 107. Low complexity-rich tracts occupy residues 114-126 (VDSS…ASSP) and 307-320 (QPQV…PSTG). Over residues 326-337 (TVDEDPDERRQR) the composition is skewed to basic and acidic residues. The bZIP domain occupies 332–395 (DERRQRFLER…AQLKQLLLAH (64 aa)). The interval 334–354 (RRQRFLERNRAAASRCRQKRK) is basic motif. The interval 360-388 (LEKKAEELTSQNIQLSNEVTLLRNEVAQL) is leucine-zipper.

The protein belongs to the bZIP family. In terms of assembly, homodimer; binds DNA as homodimer. Heterodimer; heterodimerizes with other members of ATF family and with JUN family members. Interacts with JNK2; the interaction does not phosphorylate ATF7 but acts as a docking site for other ATF-associated partners such as JUN family members. Interacts (via its transactivation domain) with TAF12 the interaction potentiates the transactivation activity and is inhibited by ATF7 sumoylation. Interacts with TAF4; the interaction inhibits the TAF12-dependent transactivation. Interacts with MAPK9; the interaction does not phosphorylate ATF7 but acts as a docking site for ATF7-associated partners such as JUN. Interacts with Ku complex components XRCC6 and XRCC7. Interacts with TERT. In terms of processing, on EGF stimulation, phosphorylated first on Thr-53 allowing subsequent phosphorylation on Thr-51. This latter phosphorylation prevents sumoylation, increases binding to TAF12 and enhances transcriptional activity. Social isolation stress as well as TNF-alpha also induce the phosphorylation of ATF7. Phosphorylated in proliferating colonic and small intestinal epithelial cells. Post-translationally, sumoylation delays nuclear localization and inhibits transactivation activity through preventing binding to TAF12. RANBP2 appears to be the specific E3 ligase.

It localises to the nucleus. The protein localises to the nucleoplasm. It is found in the chromosome. The protein resides in the telomere. Its function is as follows. Stress-responsive chromatin regulator that plays a role in various biological processes including innate immunological memory, adipocyte differentiation or telomerase regulation. In absence of stress, contributes to the formation of heterochromatin and heterochromatin-like structure by recruiting histone H3K9 tri- and di-methyltransferases thus silencing the transcription of target genes such as Htr5b, STAT1 in adipocytes, or genes involved in innate immunity in macrophages and adipocytes. Phosphorylation of ATF7 disrupts interactions with histone methyltransferase and enhances the association with coactivators containing histone acetyltransferase and/or histone demethylase, leading to disruption of the heterochromatin-like structure and subsequently transcriptional activation. In response to TNF-alpha, which is induced by various stresses, phosphorylated ATF7 and telomerase are released from telomeres leading to telomere shortening. Also plays a role in maintaining epithelial regenerative capacity and protecting against cell death during intestinal epithelial damage and repair. This Mus musculus (Mouse) protein is Cyclic AMP-dependent transcription factor ATF-7 (Atf7).